A 307-amino-acid chain; its full sequence is UDP-3-O-acyl-N-acetylglucosamine deacetylase (307 aa).

Residues histidine 80, histidine 239, and aspartate 243 each coordinate Zn(2+). Catalysis depends on histidine 266, which acts as the Proton donor.

Belongs to the LpxC family. The cofactor is Zn(2+).

The catalysed reaction is a UDP-3-O-[(3R)-3-hydroxyacyl]-N-acetyl-alpha-D-glucosamine + H2O = a UDP-3-O-[(3R)-3-hydroxyacyl]-alpha-D-glucosamine + acetate. Its pathway is glycolipid biosynthesis; lipid IV(A) biosynthesis; lipid IV(A) from (3R)-3-hydroxytetradecanoyl-[acyl-carrier-protein] and UDP-N-acetyl-alpha-D-glucosamine: step 2/6. Its function is as follows. Catalyzes the hydrolysis of UDP-3-O-myristoyl-N-acetylglucosamine to form UDP-3-O-myristoylglucosamine and acetate, the committed step in lipid A biosynthesis. The protein is UDP-3-O-acyl-N-acetylglucosamine deacetylase of Neisseria meningitidis serogroup C / serotype 2a (strain ATCC 700532 / DSM 15464 / FAM18).